The chain runs to 381 residues: MYG1 exonuclease (381 aa).

The N-terminal 47 residues, 1-47 (MGRGFLRGVLTLLPLRSVLQVQHCMLVSEPDLPPKRPRNNLMAPPRI), are a transit peptide targeting the mitochondrion. N6-acetyllysine occurs at positions 267 and 273.

The protein belongs to the MYG1 family.

It localises to the nucleus. Its subcellular location is the nucleoplasm. The protein resides in the mitochondrion matrix. The protein localises to the nucleolus. 3'-5' RNA exonuclease which cleaves in situ on specific transcripts in both nucleus and mitochondrion. Involved in regulating spatially segregated organellar RNA processing, acts as a coordinator of nucleo-mitochondrial crosstalk. In nucleolus, processes pre-ribosomal RNA involved in ribosome assembly and alters cytoplasmic translation. In mitochondrial matrix, processes 3'-termini of the mito-ribosomal and messenger RNAs and controls translation of mitochondrial proteins. This chain is MYG1 exonuclease, found in Rattus norvegicus (Rat).